We begin with the raw amino-acid sequence, 148 residues long: Aspartate carbamoyltransferase regulatory chain (148 aa).

The Zn(2+) site is built by C106, C111, C134, and C137.

The protein belongs to the PyrI family. Contains catalytic and regulatory chains. Zn(2+) serves as cofactor.

Its function is as follows. Involved in allosteric regulation of aspartate carbamoyltransferase. The chain is Aspartate carbamoyltransferase regulatory chain from Methanococcus maripaludis (strain C5 / ATCC BAA-1333).